A 573-amino-acid polypeptide reads, in one-letter code: Protein DSE1 (573 aa).

4 WD repeats span residues 144–185 (DFPP…GCAK), 315–351 (RKNTSLDCVWISNHHVAQSLNDKIQIWDIQSCDGKPV), 356–395 (AKKGYIESLKFNENTGALYSSDDQGFVICWDLQNLQNMKY), and 397–448 (ELVH…NGKG). Residues 500-509 (SDSSMLSLSN) are compositionally biased toward low complexity. The tract at residues 500–519 (SDSSMLSLSNESDHSMTETS) is disordered. Lys553 participates in a covalent cross-link: Glycyl lysine isopeptide (Lys-Gly) (interchain with G-Cter in ubiquitin).

It belongs to the WD repeat DSE1 family.

The protein localises to the bud neck. Involved in cell wall metabolism and required for the separation of the mother and daughter cells. In Saccharomyces cerevisiae (strain ATCC 204508 / S288c) (Baker's yeast), this protein is Protein DSE1 (DSE1).